Consider the following 268-residue polypeptide: tRNA threonylcarbamoyladenosine dehydratase (268 aa).

The chain crosses the membrane as a helical span at residues 237-257 (GFGAATMVTATFGFVAVSHAL).

It belongs to the HesA/MoeB/ThiF family. As to quaternary structure, interacts with CsdE.

It localises to the membrane. In terms of biological role, catalyzes the ATP-dependent dehydration of threonylcarbamoyladenosine at position 37 (t(6)A37) to form cyclic t(6)A37 (ct(6)A37) in tRNAs that read codons beginning with adenine. TcdA is also part of a sulfur transfer pathway; is able to accept sulfur from CsdA directly in vitro, but CsdE might act as the sulfur donor in vivo. The chain is tRNA threonylcarbamoyladenosine dehydratase (tcdA) from Escherichia coli (strain K12).